A 490-amino-acid chain; its full sequence is Aspartyl/glutamyl-tRNA(Asn/Gln) amidotransferase subunit B (490 aa).

It belongs to the GatB/GatE family. GatB subfamily. Heterotrimer of A, B and C subunits.

The catalysed reaction is L-glutamyl-tRNA(Gln) + L-glutamine + ATP + H2O = L-glutaminyl-tRNA(Gln) + L-glutamate + ADP + phosphate + H(+). It carries out the reaction L-aspartyl-tRNA(Asn) + L-glutamine + ATP + H2O = L-asparaginyl-tRNA(Asn) + L-glutamate + ADP + phosphate + 2 H(+). Its function is as follows. Allows the formation of correctly charged Asn-tRNA(Asn) or Gln-tRNA(Gln) through the transamidation of misacylated Asp-tRNA(Asn) or Glu-tRNA(Gln) in organisms which lack either or both of asparaginyl-tRNA or glutaminyl-tRNA synthetases. The reaction takes place in the presence of glutamine and ATP through an activated phospho-Asp-tRNA(Asn) or phospho-Glu-tRNA(Gln). The protein is Aspartyl/glutamyl-tRNA(Asn/Gln) amidotransferase subunit B of Burkholderia pseudomallei (strain 1106a).